The chain runs to 99 residues: Acylphosphatase-1 (99 aa).

The Acylphosphatase-like domain occupies 9–99 (SVDYEVFGKV…LEHSTFSICK (91 aa)). Catalysis depends on residues R24 and N42.

The protein belongs to the acylphosphatase family.

The catalysed reaction is an acyl phosphate + H2O = a carboxylate + phosphate + H(+). In Xenopus laevis (African clawed frog), this protein is Acylphosphatase-1 (acyp1).